The sequence spans 1481 residues: Cystic fibrosis transmembrane conductance regulator (1481 aa).

Over 1–77 the chain is Cytoplasmic; sequence MQRSPLEKAS…KLINALRRCF (77 aa). A helical membrane pass occupies residues 78-98; the sequence is FWRFMFYGILLYLGEVTKAVQ. The ABC transmembrane type-1 1 domain maps to 81–365; the sequence is FMFYGILLYL…WAVQTWYDSL (285 aa). Residues 99–122 lie on the Extracellular side of the membrane; sequence PLLLGRIIASYDPDNKVERSIAIY. A helical membrane pass occupies residues 123-146; that stretch reads LGIGLCLLFIVRMLLLHPAIFGLH. The Cytoplasmic portion of the chain corresponds to 147-195; it reads HIGMQMRIAMFSLIYKKILKLSSRVLDKISIGQLVSLLSNNLNKFDEGL. Residues 196–216 traverse the membrane as a helical segment; the sequence is ALAHFVWIAPLQVMLLMGLLW. The Extracellular portion of the chain corresponds to 217–222; sequence ELLQAS. The chain crosses the membrane as a helical span at residues 223–243; it reads AFCGLGFLIVLALFQSGLGRM. Topologically, residues 244-298 are cytoplasmic; sequence MMKYRDQRAGKINERLVITSEMIENIQSVKAYCWEEAMEKMIENLRQTELKLTRK. The chain crosses the membrane as a helical span at residues 299–319; the sequence is AAYVRYFNSSAFFFSGFFVVF. Topologically, residues 320 to 339 are extracellular; that stretch reads LSVLPYALIKGIILRKIFTT. A helical transmembrane segment spans residues 340–358; that stretch reads ISFCIVLRMAVTRQFPWAV. The Cytoplasmic portion of the chain corresponds to 359-858; it reads QTWYDSLGAI…YLRYITVHKS (500 aa). Residues Trp401, 458–465, and Gln493 contribute to the ATP site; that span reads GSTGAGKT. One can recognise an ABC transporter 1 domain in the interval 423-646; that stretch reads NGDNSLFFSN…RPDFSSKLMG (224 aa). Cys524 carries the S-palmitoyl cysteine lipid modification. 2 positions are modified to phosphoserine: Ser549 and Ser660. Residues 654–831 form a disordered R region region; it reads SAERRNSILT…EEINEEDLKE (178 aa). Ser670 carries the post-translational modification Phosphoserine; by PKA. Residue Ser686 is modified to Phosphoserine. Lys688 is covalently cross-linked (Glycyl lysine isopeptide (Lys-Gly) (interchain with G-Cter in ubiquitin)). Phosphoserine is present on residues Ser700 and Ser712. Thr717 is subject to Phosphothreonine. Phosphoserine is present on residues Ser737, Ser768, Ser790, Ser795, and Ser813. A helical membrane pass occupies residues 859 to 879; the sequence is LIFVLIWCLVIFLAEVAVSLV. Residues 859–1155 form the ABC transmembrane type-1 2 domain; that stretch reads LIFVLIWCLV…AVNSSIDVDS (297 aa). Residues 880–918 are Extracellular-facing; it reads LLWLLGNAPAYNKGNSTISANSSYAVIITSTSAYYVFYI. Residues Asn894 and Asn900 are each glycosylated (N-linked (GlcNAc...) asparagine). The chain crosses the membrane as a discontinuously helical span at residues 919-939; that stretch reads YVGVADTLLALGFFRGLPLVH. Over 940 to 990 the chain is Cytoplasmic; the sequence is TLITVSKILHHKMLHSVLQAPMSTLNALKAGGILNRFSKDIAILDDLLPLT. The helical transmembrane segment at 991–1011 threads the bilayer; that stretch reads IFDFIQLLLIVIGAVAVVSVL. Residues 1012-1013 lie on the Extracellular side of the membrane; sequence QP. Residues 1014–1034 traverse the membrane as a helical segment; that stretch reads YIFLATVPVIVTFIILRAYFL. At 1035–1095 the chain is on the cytoplasmic side; sequence HTSQQLKQLE…TANWFLYLST (61 aa). A helical transmembrane segment spans residues 1096–1116; sequence LRWFQMRIEMVFVIFFIVVTF. Residues 1117 to 1130 lie on the Extracellular side of the membrane; it reads ISILTTGEGEGQVG. A helical transmembrane segment spans residues 1131–1151; that stretch reads IILTLAMNIMGTLQWAVNSSI. Topologically, residues 1152 to 1481 are cytoplasmic; it reads DVDSLMRSVS…TEEEVQDTRL (330 aa). Residues 1211 to 1444 enclose the ABC transporter 2 domain; it reads MTVKDLTARY…KSLFRQAISP (234 aa). ATP-binding positions include Tyr1220 and 1245-1252; that span reads GRTGSGKS. Residues 1387–1481 form an interaction with GORASP2 region; that stretch reads RTLKQAFADC…TEEEVQDTRL (95 aa). Residue Cys1396 is the site of S-palmitoyl cysteine attachment. Phosphoserine occurs at positions 1445 and 1457. Residues 1449–1481 are disordered; it reads KLFPRRNSSKHKSRPPITALKEETEEEVQDTRL. The span at 1450-1462 shows a compositional bias: basic residues; sequence LFPRRNSSKHKSR. The span at 1471–1481 shows a compositional bias: acidic residues; the sequence is ETEEEVQDTRL. A PDZ-binding motif is present at residues 1479 to 1481; it reads TRL.

Belongs to the ABC transporter superfamily. ABCC family. CFTR transporter (TC 3.A.1.202) subfamily. Monomer; does not require oligomerization for channel activity. May form oligomers in the membrane. Interacts with SLC26A3, SLC26A6 and NHERF1. Interacts with SHANK2. Interacts with MYO6. Interacts (via C-terminus) with GOPC (via PDZ domain); this promotes CFTR internalization and thereby decreases channel activity. Interacts with SLC4A7 through NHERF1. Found in a complex with MYO5B and RAB11A. Interacts with ANO1. Interacts with SLC26A8. Interacts with AHCYL1; the interaction increases CFTR activity. Interacts with CSE1L. The core-glycosylated form interacts with GORASP2 (via PDZ GRASP-type 1 domain) in respone to ER stress. Interacts with MARCHF2; the interaction leads to CFTR ubiqtuitination and degradation. Interacts with ADGRG2. In terms of processing, N-glycosylated. Post-translationally, phosphorylated; cAMP treatment promotes phosphorylation and activates the channel. Dephosphorylation decreases the ATPase activity (in vitro). Phosphorylation at PKA sites activates the channel. Phosphorylation at PKC sites enhances the response to phosphorylation by PKA. Phosphorylated by AMPK; this inhibits channel activity. Ubiquitinated, leading to its degradation in the lysosome. Deubiquitination by USP10 in early endosomes enhances its endocytic recycling to the cell membrane. Ubiquitinated by RNF185 during ER stress. Ubiquitinated by MARCHF2.

The protein resides in the apical cell membrane. Its subcellular location is the early endosome membrane. It is found in the cell membrane. It localises to the recycling endosome membrane. The protein localises to the endoplasmic reticulum membrane. The protein resides in the nucleus. It carries out the reaction ATP + H2O + closed Cl(-) channel = ADP + phosphate + open Cl(-) channel.. The catalysed reaction is chloride(in) = chloride(out). The enzyme catalyses hydrogencarbonate(in) = hydrogencarbonate(out). It catalyses the reaction ATP + H2O = ADP + phosphate + H(+). Its function is as follows. Epithelial ion channel that plays an important role in the regulation of epithelial ion and water transport and fluid homeostasis. Mediates the transport of chloride ions across the cell membrane. Possesses an intrinsic ATPase activity and utilizes ATP to gate its channel; the passive flow of anions through the channel is gated by cycles of ATP binding and hydrolysis by the ATP-binding domains. The ion channel is also permeable to HCO(3)(-); selectivity depends on the extracellular chloride concentration. Exerts its function also by modulating the activity of other ion channels and transporters. Contributes to the regulation of the pH and the ion content of the epithelial fluid layer. Modulates the activity of the epithelial sodium channel (ENaC) complex, in part by regulating the cell surface expression of the ENaC complex. May regulate bicarbonate secretion and salvage in epithelial cells by regulating the transporter SLC4A7. Can inhibit the chloride channel activity of ANO1. Plays a role in the chloride and bicarbonate homeostasis during sperm epididymal maturation and capacitation. This is Cystic fibrosis transmembrane conductance regulator from Microcebus murinus (Gray mouse lemur).